The following is a 255-amino-acid chain: tRNA (guanine-N(7)-)-methyltransferase (255 aa).

Positions 1 to 11 (MSISDNSRDQL) are enriched in basic and acidic residues. Positions 1–25 (MSISDNSRDQLGELPAGRPLQSDFD) are disordered. S-adenosyl-L-methionine-binding residues include glutamate 83, glutamate 108, aspartate 135, and aspartate 158. The active site involves aspartate 158. Position 162 (lysine 162) interacts with substrate. The tract at residues 164 to 169 (RHNKRR) is interaction with RNA. Residues aspartate 194 and 232–235 (TKFE) contribute to the substrate site.

This sequence belongs to the class I-like SAM-binding methyltransferase superfamily. TrmB family.

It carries out the reaction guanosine(46) in tRNA + S-adenosyl-L-methionine = N(7)-methylguanosine(46) in tRNA + S-adenosyl-L-homocysteine. Its pathway is tRNA modification; N(7)-methylguanine-tRNA biosynthesis. Functionally, catalyzes the formation of N(7)-methylguanine at position 46 (m7G46) in tRNA. This is tRNA (guanine-N(7)-)-methyltransferase from Corynebacterium glutamicum (strain ATCC 13032 / DSM 20300 / JCM 1318 / BCRC 11384 / CCUG 27702 / LMG 3730 / NBRC 12168 / NCIMB 10025 / NRRL B-2784 / 534).